A 323-amino-acid chain; its full sequence is Lipoyl synthase (323 aa).

C61, C66, C72, C87, C91, C94, and S300 together coordinate [4Fe-4S] cluster. Positions 73–289 (WDKKHATFMI…ETVAYSKGFL (217 aa)) constitute a Radical SAM core domain.

The protein belongs to the radical SAM superfamily. Lipoyl synthase family. It depends on [4Fe-4S] cluster as a cofactor.

The protein resides in the cytoplasm. It catalyses the reaction [[Fe-S] cluster scaffold protein carrying a second [4Fe-4S](2+) cluster] + N(6)-octanoyl-L-lysyl-[protein] + 2 oxidized [2Fe-2S]-[ferredoxin] + 2 S-adenosyl-L-methionine + 4 H(+) = [[Fe-S] cluster scaffold protein] + N(6)-[(R)-dihydrolipoyl]-L-lysyl-[protein] + 4 Fe(3+) + 2 hydrogen sulfide + 2 5'-deoxyadenosine + 2 L-methionine + 2 reduced [2Fe-2S]-[ferredoxin]. It participates in protein modification; protein lipoylation via endogenous pathway; protein N(6)-(lipoyl)lysine from octanoyl-[acyl-carrier-protein]: step 2/2. Catalyzes the radical-mediated insertion of two sulfur atoms into the C-6 and C-8 positions of the octanoyl moiety bound to the lipoyl domains of lipoate-dependent enzymes, thereby converting the octanoylated domains into lipoylated derivatives. The chain is Lipoyl synthase from Rhizobium leguminosarum bv. trifolii (strain WSM2304).